The following is a 480-amino-acid chain: Proline--tRNA ligase (480 aa).

Belongs to the class-II aminoacyl-tRNA synthetase family. ProS type 3 subfamily. In terms of assembly, homodimer.

It localises to the cytoplasm. The enzyme catalyses tRNA(Pro) + L-proline + ATP = L-prolyl-tRNA(Pro) + AMP + diphosphate. Catalyzes the attachment of proline to tRNA(Pro) in a two-step reaction: proline is first activated by ATP to form Pro-AMP and then transferred to the acceptor end of tRNA(Pro). The sequence is that of Proline--tRNA ligase from Pyrococcus horikoshii (strain ATCC 700860 / DSM 12428 / JCM 9974 / NBRC 100139 / OT-3).